Consider the following 159-residue polypeptide: NADH-quinone oxidoreductase subunit B (159 aa).

Residues cysteine 37, cysteine 38, cysteine 102, and cysteine 132 each contribute to the [4Fe-4S] cluster site.

It belongs to the complex I 20 kDa subunit family. In terms of assembly, NDH-1 is composed of 14 different subunits. Subunits NuoB, C, D, E, F, and G constitute the peripheral sector of the complex. Requires [4Fe-4S] cluster as cofactor.

It localises to the cell inner membrane. The catalysed reaction is a quinone + NADH + 5 H(+)(in) = a quinol + NAD(+) + 4 H(+)(out). Functionally, NDH-1 shuttles electrons from NADH, via FMN and iron-sulfur (Fe-S) centers, to quinones in the respiratory chain. Couples the redox reaction to proton translocation (for every two electrons transferred, four hydrogen ions are translocated across the cytoplasmic membrane), and thus conserves the redox energy in a proton gradient. The protein is NADH-quinone oxidoreductase subunit B of Polaromonas naphthalenivorans (strain CJ2).